The chain runs to 404 residues: Cysteine desulfurase IscS (404 aa).

Residues 75–76 (AT), asparagine 155, glutamine 183, and 203–205 (SAH) each bind pyridoxal 5'-phosphate. Position 206 is an N6-(pyridoxal phosphate)lysine (lysine 206). Threonine 243 serves as a coordination point for pyridoxal 5'-phosphate. Cysteine 328 serves as the catalytic Cysteine persulfide intermediate. Residue cysteine 328 coordinates [2Fe-2S] cluster.

This sequence belongs to the class-V pyridoxal-phosphate-dependent aminotransferase family. NifS/IscS subfamily. Homodimer. Forms a heterotetramer with IscU, interacts with other sulfur acceptors. Pyridoxal 5'-phosphate is required as a cofactor.

The protein localises to the cytoplasm. The enzyme catalyses (sulfur carrier)-H + L-cysteine = (sulfur carrier)-SH + L-alanine. Its pathway is cofactor biosynthesis; iron-sulfur cluster biosynthesis. In terms of biological role, master enzyme that delivers sulfur to a number of partners involved in Fe-S cluster assembly, tRNA modification or cofactor biosynthesis. Catalyzes the removal of elemental sulfur atoms from cysteine to produce alanine. Functions as a sulfur delivery protein for Fe-S cluster synthesis onto IscU, an Fe-S scaffold assembly protein, as well as other S acceptor proteins. In Aeromonas salmonicida (strain A449), this protein is Cysteine desulfurase IscS.